We begin with the raw amino-acid sequence, 290 residues long: Energy-coupling factor transporter ATP-binding protein EcfA2 (290 aa).

The 241-residue stretch at 6–246 (EKVEHVYNAR…ADKLAAIGLS (241 aa)) folds into the ABC transporter domain. ATP is bound at residue 40–47 (GHTGSGKS).

The protein belongs to the ABC transporter superfamily. Energy-coupling factor EcfA family. Forms a stable energy-coupling factor (ECF) transporter complex composed of 2 membrane-embedded substrate-binding proteins (S component), 2 ATP-binding proteins (A component) and 2 transmembrane proteins (T component).

The protein localises to the cell membrane. Its function is as follows. ATP-binding (A) component of a common energy-coupling factor (ECF) ABC-transporter complex. Unlike classic ABC transporters this ECF transporter provides the energy necessary to transport a number of different substrates. This is Energy-coupling factor transporter ATP-binding protein EcfA2 from Geobacillus kaustophilus (strain HTA426).